Consider the following 150-residue polypeptide: 3-hydroxyacyl-[acyl-carrier-protein] dehydratase FabZ (150 aa).

H57 is an active-site residue.

The protein belongs to the thioester dehydratase family. FabZ subfamily.

It is found in the cytoplasm. It carries out the reaction a (3R)-hydroxyacyl-[ACP] = a (2E)-enoyl-[ACP] + H2O. Involved in unsaturated fatty acids biosynthesis. Catalyzes the dehydration of short chain beta-hydroxyacyl-ACPs and long chain saturated and unsaturated beta-hydroxyacyl-ACPs. This is 3-hydroxyacyl-[acyl-carrier-protein] dehydratase FabZ from Actinobacillus succinogenes (strain ATCC 55618 / DSM 22257 / CCUG 43843 / 130Z).